We begin with the raw amino-acid sequence, 205 residues long: MPASASPSIAGLLLAGGRATRMDGVDKGLQLLDGTPLALHVLSRLSPQVDETLISANRHADRYAELGAPFDARIVADETPDFPGPLAGLLAGMRAARAPLVACSPCDTPYLPADLVARLQAALDAQQADIAMAVTVDAQHVRSPQPTFALLRTSLADDLAARLAAGDRKVRAWYARHKTVEVEFHDERAFYNANSWQELAALARR.

GTP contacts are provided by residues 14–16 (LAG), Lys27, Asp77, and Asp107. Asp107 is a Mg(2+) binding site.

Belongs to the MobA family. Monomer. It depends on Mg(2+) as a cofactor.

The protein resides in the cytoplasm. It catalyses the reaction Mo-molybdopterin + GTP + H(+) = Mo-molybdopterin guanine dinucleotide + diphosphate. Transfers a GMP moiety from GTP to Mo-molybdopterin (Mo-MPT) cofactor (Moco or molybdenum cofactor) to form Mo-molybdopterin guanine dinucleotide (Mo-MGD) cofactor. The polypeptide is Molybdenum cofactor guanylyltransferase (Burkholderia lata (strain ATCC 17760 / DSM 23089 / LMG 22485 / NCIMB 9086 / R18194 / 383)).